The sequence spans 466 residues: Asparagine--tRNA ligase (466 aa).

It belongs to the class-II aminoacyl-tRNA synthetase family. In terms of assembly, homodimer.

The protein localises to the cytoplasm. It catalyses the reaction tRNA(Asn) + L-asparagine + ATP = L-asparaginyl-tRNA(Asn) + AMP + diphosphate + H(+). The chain is Asparagine--tRNA ligase from Shewanella baltica (strain OS155 / ATCC BAA-1091).